Here is a 129-residue protein sequence, read N- to C-terminus: Large ribosomal subunit protein bL12 (129 aa).

It belongs to the bacterial ribosomal protein bL12 family. In terms of assembly, homodimer. Part of the ribosomal stalk of the 50S ribosomal subunit. Forms a multimeric L10(L12)X complex, where L10 forms an elongated spine to which 2 to 4 L12 dimers bind in a sequential fashion. Binds GTP-bound translation factors.

In terms of biological role, forms part of the ribosomal stalk which helps the ribosome interact with GTP-bound translation factors. Is thus essential for accurate translation. The sequence is that of Large ribosomal subunit protein bL12 from Fervidobacterium nodosum (strain ATCC 35602 / DSM 5306 / Rt17-B1).